A 290-amino-acid polypeptide reads, in one-letter code: Energy-coupling factor transporter ATP-binding protein EcfA2 (290 aa).

Residues 6–246 (EKVEHVYNAR…ADKLAAIGLS (241 aa)) form the ABC transporter domain. An ATP-binding site is contributed by 40-47 (GHTGSGKS).

The protein belongs to the ABC transporter superfamily. Energy-coupling factor EcfA family. In terms of assembly, forms a stable energy-coupling factor (ECF) transporter complex composed of 2 membrane-embedded substrate-binding proteins (S component), 2 ATP-binding proteins (A component) and 2 transmembrane proteins (T component).

Its subcellular location is the cell membrane. In terms of biological role, ATP-binding (A) component of a common energy-coupling factor (ECF) ABC-transporter complex. Unlike classic ABC transporters this ECF transporter provides the energy necessary to transport a number of different substrates. The chain is Energy-coupling factor transporter ATP-binding protein EcfA2 from Geobacillus kaustophilus (strain HTA426).